The following is a 219-amino-acid chain: Small ribosomal subunit protein eS1 (219 aa).

Belongs to the eukaryotic ribosomal protein eS1 family. Component of the small ribosomal subunit. Mature ribosomes consist of a small (40S) and a large (60S) subunit. The 40S subunit contains about 33 different proteins and 1 molecule of RNA (18S). The 60S subunit contains about 49 different proteins and 3 molecules of RNA (25S, 5.8S and 5S).

The protein localises to the cytoplasm. The polypeptide is Small ribosomal subunit protein eS1 (Guillardia theta (Cryptophyte)).